Here is a 452-residue protein sequence, read N- to C-terminus: MLLTAYFVLVGLIALWAVLEFSACHSKPSTSSNAVGNPAFRQFQYDFYRTYFPALAADWLQGPYLYKLYQHYHFLEGQIAIIYVCGFGASVFAGLVSAPLTSRLGRRKSCILFCLLLSASYLCKLSQEYFVLITGRVLGGFSSSLLFSSFEAWYTHEHAEQHDFPAEWLPHTFTRAAAWNGGIAIAAGVIANACAEWLGLGPASPSVLAVPLLVLSVALVIREWDENYGQTSSFRRVCGDGLRCLLRDRRVLLLGTIQALFESVVYIFIFLWTPVLDPHNTPLGIAFSSFMAASAAGSSLYRLATSKKYHLQPMHVLCLSILMVFFSLFMLTFSTAPGQEHPTESLLAFLLIELACGLYFPAMGFLRCRLIPEKEQIGVLNWFRVPLNLLAGLGLLVLHDSDYQSGTRNMFSLCAITMLLALLCVVSLFTMVRNDSELRLPTSETEPNGTEQ.

The next 12 membrane-spanning stretches (helical) occupy residues 1-21 (MLLT…VLEF), 45-65 (YDFY…GPYL), 79-99 (IAII…VSAP), 130-150 (FVLI…FSSF), 180-200 (NGGI…WLGL), 201-221 (GPAS…ALVI), 251-271 (VLLL…FIFL), 281-301 (TPLG…SSLY), 316-336 (VLCL…FSTA), 346-366 (LLAF…MGFL), 377-397 (IGVL…GLLV), and 410-430 (MFSL…SLFT).

It belongs to the major facilitator superfamily.

It is found in the cell membrane. Mediates high-affinity intracellular uptake of the rare oligo-element molybdenum. In Xenopus tropicalis (Western clawed frog), this protein is Molybdate-anion transporter (mfsd5).